The chain runs to 146 residues: Bradykinin-like neuropeptide (146 aa).

The signal sequence occupies residues 1–24; the sequence is MTSSIYGFITLSVVALISQTTCRS. 2 propeptides span residues 25–80 and 92–146; these read LDLL…LMEA and LRSY…FRYG.

In terms of tissue distribution, neuron L5.

It localises to the secreted. Its function is as follows. May have important functions in renal physiology and in animal behavior, as does bradykinin. The polypeptide is Bradykinin-like neuropeptide (LUQ-1) (Aplysia californica (California sea hare)).